Here is a 1580-residue protein sequence, read N- to C-terminus: Dynamin-binding protein (1580 aa).

Methionine 1 carries the N-acetylmethionine modification. SH3 domains lie at 2–61 (EPGS…IVTI), 66–127 (EGER…ELCL), and 146–205 (YSLG…LLGP). Disordered regions lie at residues 211–245 (ESVN…DQQS), 304–446 (NRTE…LVPL), 500–546 (YAQK…DSLD), and 589–688 (RGSS…AQTF). The segment covering 229–243 (VPPEEAESGGDEDDQ) has biased composition (acidic residues). The SH3 4 domain maps to 244–303 (QSGTYGIALYRFQALETNELDFEVGDRIQILGTLEDGWLEGCLKGKTGVFPHRFVKLCPS). Polar residues-rich tracts occupy residues 422–439 (QKSQ…TSDP) and 502–513 (QKHQTSTENTAS). Positions 516–527 (DPPERPERRPGL) are enriched in basic and acidic residues. The span at 608–617 (RPPPPRPRTP) shows a compositional bias: pro residues. The segment covering 671-682 (APEKEDSEHMEK) has biased composition (basic and acidic residues). Phosphoserine is present on serine 683. Residues 694–755 (LARIRDVEQD…LELQQLRDMT (62 aa)) are a coiled coil. A DH domain is found at 783–970 (KRAKVVAELL…KEINVNINEY (188 aa)). The 210-residue stretch at 1011 to 1220 (LKHLTGFAPQ…LKATDREGNL (210 aa)) folds into the BAR domain. One can recognise an SH3 5 domain in the interval 1288–1351 (PPEKLFHVQR…YSSFLKPYNP (64 aa)). Residues 1356–1365 (SDASVASHSS) are compositionally biased toward low complexity. 2 disordered regions span residues 1356-1384 (SDAS…NSHS) and 1426-1514 (TGHP…GSSE). Polar residues predominate over residues 1426–1440 (TGHPETGPSTCSSDP). The 64-residue stretch at 1516-1579 (EGNQVYFAIY…PSNYIRKTEY (64 aa)) folds into the SH3 6 domain.

In terms of assembly, binds DNM1 via its N-terminal SH3 domains. The C-terminal SH3 domain binds a complex containing actin, tubulin, Hsp70 and actin-regulatory proteins, such as ENAH, EVL, WIRE, CR16, WAVE1 and NAP1L1. Interacts with FASLG. Interacts (via SH3 domain 6) with WASL. Interacts (via SH3 domain 6) interacts with ENAH. Interacts (via C-terminal domain) with TJP1; required for the apical cell-cell junction localization of DNMBP.

The protein resides in the cytoplasm. Its subcellular location is the golgi apparatus. It is found in the golgi stack. It localises to the cytoskeleton. The protein localises to the synapse. The protein resides in the cell junction. In terms of biological role, plays a critical role as a guanine nucleotide exchange factor (GEF) for CDC42 in several intracellular processes associated with the actin and microtubule cytoskeleton. Regulates the structure of apical junctions in epithelial cells. Participates in the normal lumenogenesis of epithelial cell cysts by regulating spindle orientation. Plays a role in ciliogenesis. May play a role in membrane trafficking between the cell surface and the Golgi. The protein is Dynamin-binding protein of Mus musculus (Mouse).